The primary structure comprises 616 residues: Dihydroxy-acid dehydratase (616 aa).

Aspartate 81 lines the Mg(2+) pocket. Cysteine 122 contacts [2Fe-2S] cluster. Mg(2+)-binding residues include aspartate 123 and lysine 124. Position 124 is an N6-carboxylysine (lysine 124). Cysteine 197 is a binding site for [2Fe-2S] cluster. Glutamate 493 provides a ligand contact to Mg(2+). Serine 519 functions as the Proton acceptor in the catalytic mechanism.

It belongs to the IlvD/Edd family. In terms of assembly, homodimer. Requires [2Fe-2S] cluster as cofactor. It depends on Mg(2+) as a cofactor.

The enzyme catalyses (2R)-2,3-dihydroxy-3-methylbutanoate = 3-methyl-2-oxobutanoate + H2O. It catalyses the reaction (2R,3R)-2,3-dihydroxy-3-methylpentanoate = (S)-3-methyl-2-oxopentanoate + H2O. It participates in amino-acid biosynthesis; L-isoleucine biosynthesis; L-isoleucine from 2-oxobutanoate: step 3/4. The protein operates within amino-acid biosynthesis; L-valine biosynthesis; L-valine from pyruvate: step 3/4. In terms of biological role, functions in the biosynthesis of branched-chain amino acids. Catalyzes the dehydration of (2R,3R)-2,3-dihydroxy-3-methylpentanoate (2,3-dihydroxy-3-methylvalerate) into 2-oxo-3-methylpentanoate (2-oxo-3-methylvalerate) and of (2R)-2,3-dihydroxy-3-methylbutanoate (2,3-dihydroxyisovalerate) into 2-oxo-3-methylbutanoate (2-oxoisovalerate), the penultimate precursor to L-isoleucine and L-valine, respectively. In Corynebacterium kroppenstedtii (strain DSM 44385 / JCM 11950 / CIP 105744 / CCUG 35717), this protein is Dihydroxy-acid dehydratase.